The primary structure comprises 84 residues: ATP synthase subunit c (84 aa).

A run of 2 helical transmembrane segments spans residues 9-29 (IIGA…GFAI) and 54-74 (IVAG…LLFI).

The protein belongs to the ATPase C chain family. In terms of assembly, F-type ATPases have 2 components, F(1) - the catalytic core - and F(0) - the membrane proton channel. F(1) has five subunits: alpha(3), beta(3), gamma(1), delta(1), epsilon(1). F(0) has three main subunits: a(1), b(2) and c(10-14). The alpha and beta chains form an alternating ring which encloses part of the gamma chain. F(1) is attached to F(0) by a central stalk formed by the gamma and epsilon chains, while a peripheral stalk is formed by the delta and b chains.

The protein resides in the cell inner membrane. In terms of biological role, f(1)F(0) ATP synthase produces ATP from ADP in the presence of a proton or sodium gradient. F-type ATPases consist of two structural domains, F(1) containing the extramembraneous catalytic core and F(0) containing the membrane proton channel, linked together by a central stalk and a peripheral stalk. During catalysis, ATP synthesis in the catalytic domain of F(1) is coupled via a rotary mechanism of the central stalk subunits to proton translocation. Its function is as follows. Key component of the F(0) channel; it plays a direct role in translocation across the membrane. A homomeric c-ring of between 10-14 subunits forms the central stalk rotor element with the F(1) delta and epsilon subunits. This chain is ATP synthase subunit c, found in Haemophilus ducreyi (strain 35000HP / ATCC 700724).